The primary structure comprises 263 residues: uncharacterized protein (263 aa).

The ABC transporter domain maps to 12–247 (LETQNLAIGY…ENLAKIYRTS (236 aa)). 44–51 (GANGAGKS) contributes to the ATP binding site.

The protein belongs to the ABC transporter superfamily.

This is an uncharacterized protein from Haemophilus influenzae (strain ATCC 51907 / DSM 11121 / KW20 / Rd).